The primary structure comprises 60 residues: Large ribosomal subunit protein bL33 (60 aa).

Belongs to the bacterial ribosomal protein bL33 family.

This Chlorobium luteolum (strain DSM 273 / BCRC 81028 / 2530) (Pelodictyon luteolum) protein is Large ribosomal subunit protein bL33.